We begin with the raw amino-acid sequence, 346 residues long: Putative aquaporin-7B (346 aa).

At 1-40 (MVQASGHRRSTRGSKMVSWSVIAKIQEIWCEEDERKMVRE) the chain is on the cytoplasmic side. The helical transmembrane segment at 41 to 58 (FLAEFMSTYVMMVFGLGS) threads the bilayer. The Extracellular portion of the chain corresponds to 59–71 (VAHMVLNKTYGSY). Residues 72 to 89 (LGVNLGFGFGVTMGVHVA) traverse the membrane as a helical segment. Residues 90–93 (GRIS) lie on the Cytoplasmic side of the membrane. Positions 94–107 (GAHMNAAVTFTNCA) form an intramembrane region, discontinuously helical. The short motif at 98–100 (NAA) is the NPA 1 element. The Cytoplasmic portion of the chain corresponds to 108-115 (LGRVPWRK). Residues 116–136 (FPVHVLGQFLGSFLAAATIYS) form a helical membrane-spanning segment. Residues 137–174 (LFYTAILHFSGGELMVTGPFATAGIFATYLPDHMTLWR) are Extracellular-facing. The helical transmembrane segment at 175–192 (GFLNEEWLTRMLQLCLFT) threads the bilayer. At 193-204 (ITDQENNPALPG) the chain is on the cytoplasmic side. The chain crosses the membrane as a helical span at residues 205–221 (THALVISILVVIIRVSH). The Extracellular segment spans residues 222 to 225 (GINT). An intramembrane region (discontinuously helical) is located at residues 226–239 (GYAINPSRDPPPSI). An NPA 2 motif is present at residues 230-232 (NPS). The Extracellular portion of the chain corresponds to 240 to 257 (FTFIAGWGKQVFSDGENW). Residues 258–279 (WWVPVVAPLLGASLGGIIYLVF) traverse the membrane as a helical segment. Residues 280 to 346 (IGSTIPREPL…LHESMALEHF (67 aa)) are Cytoplasmic-facing.

This sequence belongs to the MIP/aquaporin (TC 1.A.8) family. Homotetramer; each monomer provides an independent glycerol/water pore.

It localises to the membrane. The catalysed reaction is glycerol(in) = glycerol(out). The enzyme catalyses H2O(in) = H2O(out). Functionally, aquaglyceroporins form homotetrameric transmembrane channels, with each monomer independently mediating glycerol and water transport across the plasma membrane along their osmotic gradient. This chain is Putative aquaporin-7B, found in Homo sapiens (Human).